A 410-amino-acid polypeptide reads, in one-letter code: Protein king tubby 2 (410 aa).

The span at 48 to 72 (SPNNPDQILTSTGNASITTTPTSPY) shows a compositional bias: polar residues. Disordered stretches follow at residues 48–109 (SPNN…STRH) and 121–159 (ISPA…EGDV). Residues 132 to 143 (SHHDSSSGKSVE) are compositionally biased toward basic and acidic residues.

It belongs to the TUB family.

The protein resides in the cytoplasm. The protein localises to the nucleus. The chain is Protein king tubby 2 (king-tubby2) from Aedes aegypti (Yellowfever mosquito).